The following is a 179-amino-acid chain: Large ribosomal subunit protein uL5 (179 aa).

Belongs to the universal ribosomal protein uL5 family. In terms of assembly, part of the 50S ribosomal subunit; part of the 5S rRNA/L5/L18/L25 subcomplex. Contacts the 5S rRNA and the P site tRNA. Forms a bridge to the 30S subunit in the 70S ribosome.

Functionally, this is one of the proteins that bind and probably mediate the attachment of the 5S RNA into the large ribosomal subunit, where it forms part of the central protuberance. In the 70S ribosome it contacts protein S13 of the 30S subunit (bridge B1b), connecting the 2 subunits; this bridge is implicated in subunit movement. Contacts the P site tRNA; the 5S rRNA and some of its associated proteins might help stabilize positioning of ribosome-bound tRNAs. In Dictyoglomus thermophilum (strain ATCC 35947 / DSM 3960 / H-6-12), this protein is Large ribosomal subunit protein uL5.